Consider the following 365-residue polypeptide: U1 snRNP-associated protein usp109 (365 aa).

3 consecutive RRM domains span residues 3-79 (TSLW…VVPE), 86-162 (YMLF…SVKS), and 189-259 (TAVY…WARP).

Component of the U1 snRNP complex.

It is found in the nucleus. The polypeptide is U1 snRNP-associated protein usp109 (usp109) (Schizosaccharomyces pombe (strain 972 / ATCC 24843) (Fission yeast)).